The sequence spans 466 residues: Siroheme synthase (466 aa).

The precorrin-2 dehydrogenase /sirohydrochlorin ferrochelatase stretch occupies residues 1-203 (MNYLPIFIDI…GKIQEAKADL (203 aa)). NAD(+) contacts are provided by residues 22 to 23 (SI) and 43 to 44 (KS). Ser-128 is modified (phosphoserine). Residues 216–466 (GAVYLVGGGP…FDAKPISSKK (251 aa)) form a uroporphyrinogen-III C-methyltransferase region. Pro-225 is a binding site for S-adenosyl-L-methionine. Asp-248 serves as the catalytic Proton acceptor. The active-site Proton donor is Lys-270. S-adenosyl-L-methionine-binding positions include 301–303 (GGD), Ile-306, 331–332 (TA), Met-383, and Gly-412.

This sequence in the N-terminal section; belongs to the precorrin-2 dehydrogenase / sirohydrochlorin ferrochelatase family. In the C-terminal section; belongs to the precorrin methyltransferase family.

The catalysed reaction is uroporphyrinogen III + 2 S-adenosyl-L-methionine = precorrin-2 + 2 S-adenosyl-L-homocysteine + H(+). It catalyses the reaction precorrin-2 + NAD(+) = sirohydrochlorin + NADH + 2 H(+). The enzyme catalyses siroheme + 2 H(+) = sirohydrochlorin + Fe(2+). The protein operates within cofactor biosynthesis; adenosylcobalamin biosynthesis; precorrin-2 from uroporphyrinogen III: step 1/1. Its pathway is cofactor biosynthesis; adenosylcobalamin biosynthesis; sirohydrochlorin from precorrin-2: step 1/1. It participates in porphyrin-containing compound metabolism; siroheme biosynthesis; precorrin-2 from uroporphyrinogen III: step 1/1. It functions in the pathway porphyrin-containing compound metabolism; siroheme biosynthesis; siroheme from sirohydrochlorin: step 1/1. The protein operates within porphyrin-containing compound metabolism; siroheme biosynthesis; sirohydrochlorin from precorrin-2: step 1/1. Functionally, multifunctional enzyme that catalyzes the SAM-dependent methylations of uroporphyrinogen III at position C-2 and C-7 to form precorrin-2 via precorrin-1. Then it catalyzes the NAD-dependent ring dehydrogenation of precorrin-2 to yield sirohydrochlorin. Finally, it catalyzes the ferrochelation of sirohydrochlorin to yield siroheme. The protein is Siroheme synthase of Vesicomyosocius okutanii subsp. Calyptogena okutanii (strain HA).